Reading from the N-terminus, the 670-residue chain is Probable leucine-rich repeat receptor-like protein kinase At1g68400 (670 aa).

An N-terminal signal peptide occupies residues 1–29 (MAKSSFFNKHLLLSLLILLQSCLLSSSSS). At 30–274 (TDSETLLNFK…KSNNTSRIST (245 aa)) the chain is on the extracellular side. N-linked (GlcNAc...) asparagine glycosylation is found at Asn-52, Asn-79, Asn-102, Asn-109, and Asn-112. 6 LRR repeats span residues 69-91 (RVTRLVLEDINLTGSISSLTSLT), 92-114 (SLRVLSLKHNNLSGPIPNLSNLT), 115-137 (ALKLLFLSNNQFSGNFPTSITSL), 139-162 (RLYRLDLSFNNFSGQIPPDLTDLT), 163-185 (HLLTLRLESNRFSGQIPNINLSD), and 186-207 (LQDFNVSGNNFNGQIPNSLSQF). Residues Asn-149, Asn-182, and Asn-190 are each glycosylated (N-linked (GlcNAc...) asparagine). Residues 230–266 (SSDPTKPGRPDEAKASPLNKPETVPSSPTSIHGGDKS) are disordered. Residues 253–266 (VPSSPTSIHGGDKS) show a composition bias toward polar residues. Residue Asn-268 is glycosylated (N-linked (GlcNAc...) asparagine). A helical membrane pass occupies residues 275–295 (ISLIAIILGDFIILSFVSLLL). Topologically, residues 296–670 (YYCFWRQYAV…EDTCGGTTSQ (375 aa)) are cytoplasmic. The 275-residue stretch at 362–636 (RASAEMLGKG…GHVVKLIEDI (275 aa)) folds into the Protein kinase domain. Ser-364 is subject to Phosphoserine. Residues 368–376 (LGKGGFGTA) and Lys-390 each bind ATP. Position 443 is a phosphoserine (Ser-443). Thr-463 carries the phosphothreonine modification. Residue Asp-491 is the Proton acceptor of the active site. Thr-616 bears the Phosphothreonine mark.

Belongs to the protein kinase superfamily. Ser/Thr protein kinase family.

Its subcellular location is the cell membrane. It carries out the reaction L-seryl-[protein] + ATP = O-phospho-L-seryl-[protein] + ADP + H(+). The catalysed reaction is L-threonyl-[protein] + ATP = O-phospho-L-threonyl-[protein] + ADP + H(+). The protein is Probable leucine-rich repeat receptor-like protein kinase At1g68400 of Arabidopsis thaliana (Mouse-ear cress).